A 740-amino-acid chain; its full sequence is MENETHYAEAVIDNGAFGTRTIRFETGRLAKQAAGSAVAYLDDDTMVLSATTASKNPKDQLDFFPLTVDVEERMYAAGKIPGSFFRREGRPSEDAILTCRLIDRPLRPSFKKGLRNEIQVVATIMALNPDHLYDVVAINAASASTQLAGLPFSGPYGGVRVALIRGQWVAFPTHTELEDAVFDMVVAGRVLEDGDVAIMMVEAEATEKTVQLVKDGAEAPTEEVVAAGLDAAKPFIKVLCKAQADLAAKAAKPTGEFPVPSSTTRTTSEALSAAVRPELSAALTIAGKQDREAELDRVKALAAEKLLPEFEGREKEISAAYRPWPSSSSAERVIKEKKRIDGRGVTDIRTLAAEVEAIPRVHGSALFERGETQILGVTTLNMLRMEQQLDTLSPVTRKPYMHNYNFPPISVGETGRVGSPKRREIGHGALAERAIVPVLPTREEFPYAIRQVSEALGSNGSTSMGSVCASTMSLLNAGVPLKAPVAGIAMGLISQEINGETHYVALTDILGAEDAFGDMDFKVAGTKEFVTALQLDTKLDGIPASVLAAALKQARDARLHILDVMMEAIDTPDEMSPNAPRIITVKIPVDKIGEVIGPKRQMINQIQEDTGAEITIEDDGTIYIGAADGPAAEAARATINGIANPTSPEVGERILGSVVKTTTFGAFVSLLPGKDGLLHISQIRKLAGGKRVENVEDVLGVGQKVQVEIAEIDSRGKLSLIPVIEGEEAASDEKKDDAEQ.

Residues aspartate 514 and aspartate 520 each contribute to the Mg(2+) site. A KH domain is found at proline 580–isoleucine 639. Residues glycine 651–valine 723 enclose the S1 motif domain.

It belongs to the polyribonucleotide nucleotidyltransferase family. As to quaternary structure, homotrimer. It depends on Mg(2+) as a cofactor.

It localises to the cytoplasm. It carries out the reaction RNA(n+1) + phosphate = RNA(n) + a ribonucleoside 5'-diphosphate. Involved in mRNA degradation. Catalyzes the phosphorolysis of single-stranded polyribonucleotides processively in the 3'- to 5'-direction. In Streptomyces antibioticus, this protein is Polyribonucleotide nucleotidyltransferase.